Here is a 145-residue protein sequence, read N- to C-terminus: 3-dehydroquinate dehydratase (145 aa).

Tyr-23 acts as the Proton acceptor in catalysis. Residues Asn-75, His-81, and Asp-88 each contribute to the substrate site. His-101 acts as the Proton donor in catalysis. Substrate contacts are provided by residues 102–103 (IS) and Arg-112.

It belongs to the type-II 3-dehydroquinase family. As to quaternary structure, homododecamer.

It catalyses the reaction 3-dehydroquinate = 3-dehydroshikimate + H2O. It participates in metabolic intermediate biosynthesis; chorismate biosynthesis; chorismate from D-erythrose 4-phosphate and phosphoenolpyruvate: step 3/7. Functionally, catalyzes a trans-dehydration via an enolate intermediate. The sequence is that of 3-dehydroquinate dehydratase from Caldicellulosiruptor saccharolyticus (strain ATCC 43494 / DSM 8903 / Tp8T 6331).